The sequence spans 309 residues: Porphobilinogen deaminase (309 aa).

Cys240 is subject to S-(dipyrrolylmethanemethyl)cysteine.

The protein belongs to the HMBS family. In terms of assembly, monomer. It depends on dipyrromethane as a cofactor.

The enzyme catalyses 4 porphobilinogen + H2O = hydroxymethylbilane + 4 NH4(+). It functions in the pathway porphyrin-containing compound metabolism; protoporphyrin-IX biosynthesis; coproporphyrinogen-III from 5-aminolevulinate: step 2/4. Tetrapolymerization of the monopyrrole PBG into the hydroxymethylbilane pre-uroporphyrinogen in several discrete steps. This is Porphobilinogen deaminase from Lawsonia intracellularis (strain PHE/MN1-00).